Here is a 491-residue protein sequence, read N- to C-terminus: Probable cysteine proteinase 024R (491 aa).

Active-site residues include C132, H325, and N355. Residues A467 to G487 traverse the membrane as a helical segment.

The protein belongs to the peptidase C1 family.

The protein resides in the membrane. Its function is as follows. Probable cysteine protease. In Invertebrate iridescent virus 3 (IIV-3), this protein is Probable cysteine proteinase 024R.